The chain runs to 127 residues: Fumarate reductase subunit C (127 aa).

3 consecutive transmembrane segments (helical) span residues 30–50 (ATVLPLILFTLFLTVGLGSLV), 67–87 (LVIAINLVALAGSLFHAQTFF), and 107–127 (IIVLAQWAAVAFISLIVLIVV).

This sequence belongs to the FrdC family. As to quaternary structure, part of an enzyme complex containing four subunits: a flavoprotein (FrdA), an iron-sulfur protein (FrdB), and two hydrophobic anchor proteins (FrdC and FrdD).

It is found in the cell inner membrane. Its function is as follows. Anchors the catalytic components of the fumarate reductase complex to the cell membrane, binds quinones. This Vibrio cholerae serotype O1 (strain ATCC 39541 / Classical Ogawa 395 / O395) protein is Fumarate reductase subunit C.